Here is a 640-residue protein sequence, read N- to C-terminus: Zinc finger protein 549 (640 aa).

The KRAB domain maps to 27–140 (VTFEDIAVYF…PYTSVASGKW (114 aa)). Residues 217–241 (FQQRRYKCEQVFNEKVHVTEHQRVH) form a C2H2-type 1; degenerate zinc finger. Residue lysine 223 forms a Glycyl lysine isopeptide (Lys-Gly) (interchain with G-Cter in SUMO2) linkage. Residues 247–269 (YKRREYGKSLNSKYLFVEHQRTH) form a C2H2-type 2; degenerate zinc finger. C2H2-type zinc fingers lie at residues 275–298 (YVCN…QRIH), 304–326 (YVCI…QRTH), 332–355 (YVCN…QRIH), 361–383 (YVCM…QRVH), 389–411 (YQCS…HRIH), 417–439 (YECK…QRIH), 445–467 (YVCI…QRIH), 473–495 (YECS…HKIH), 501–523 (YECS…QRIH), 529–551 (CECN…QKVH), 557–579 (CECS…QKVH), 585–607 (YNCT…QRIH), and 613–635 (YECG…QKVH).

It belongs to the krueppel C2H2-type zinc-finger protein family.

It localises to the nucleus. May be involved in transcriptional regulation. The protein is Zinc finger protein 549 (ZNF549) of Homo sapiens (Human).